The sequence spans 807 residues: Glycerol-3-phosphate acyltransferase (807 aa).

Positions 306 to 311 (HRSHMD) match the HXXXXD motif motif.

This sequence belongs to the GPAT/DAPAT family.

The protein resides in the cell inner membrane. It catalyses the reaction sn-glycerol 3-phosphate + an acyl-CoA = a 1-acyl-sn-glycero-3-phosphate + CoA. The protein operates within phospholipid metabolism; CDP-diacylglycerol biosynthesis; CDP-diacylglycerol from sn-glycerol 3-phosphate: step 1/3. The protein is Glycerol-3-phosphate acyltransferase (plsB) of Escherichia coli O157:H7.